The primary structure comprises 134 residues: Snaclec alboaggregin-A subunit alpha' (134 aa).

The C-type lectin domain maps to 1-134; it reads DFHCLPGWSA…NPFVCKFPPQ (134 aa). Cystine bridges form between Cys-4–Cys-15, Cys-32–Cys-129, and Cys-104–Cys-121.

The protein belongs to the snaclec family. As to quaternary structure, heterotetramer of the subunits alpha, alpha', beta and beta'; disulfide-linked. Expressed by the venom gland.

It localises to the secreted. Its function is as follows. Potent platelet activator that aggregates platelets via both GPIbalpha (GP1BA) and GPVI (GP6). Induces a tyrosine phosphorylation profile in platelets that resembles this produced by collagen, involving the time dependent tyrosine phosphorylation of Fc receptor gamma chain (FCGR1A), phospholipase Cgamma2 (PLCG2), and LAT. In Trimeresurus albolabris (White-lipped pit viper), this protein is Snaclec alboaggregin-A subunit alpha'.